The following is a 215-amino-acid chain: 3,4-dihydroxy-2-butanone 4-phosphate synthase (215 aa).

Residues 38–39 (RE), Asp-43, 151–155 (RRGHT), and Glu-175 contribute to the D-ribulose 5-phosphate site. Glu-39 is a binding site for Mg(2+). His-154 is a Mg(2+) binding site.

The protein belongs to the DHBP synthase family. Homodimer. It depends on Mg(2+) as a cofactor. The cofactor is Mn(2+).

It carries out the reaction D-ribulose 5-phosphate = (2S)-2-hydroxy-3-oxobutyl phosphate + formate + H(+). The protein operates within cofactor biosynthesis; riboflavin biosynthesis; 2-hydroxy-3-oxobutyl phosphate from D-ribulose 5-phosphate: step 1/1. Catalyzes the conversion of D-ribulose 5-phosphate to formate and 3,4-dihydroxy-2-butanone 4-phosphate. In Haemophilus influenzae (strain PittGG), this protein is 3,4-dihydroxy-2-butanone 4-phosphate synthase.